The sequence spans 390 residues: Neuromedin-B receptor (390 aa).

The segment covering Met1–Gly19 has biased composition (polar residues). The segment at Met1 to Pro22 is disordered. Over Met1–Val41 the chain is Extracellular. N-linked (GlcNAc...) asparagine glycans are attached at residues Asn8 and Asn16. The helical transmembrane segment at Ile42–Val65 threads the bilayer. The Cytoplasmic segment spans residues Lys66–Asn79. A helical transmembrane segment spans residues Ile80–Val99. Residues Asp100–Lys117 are Extracellular-facing. Cys116 and Cys198 are oxidised to a cystine. A helical transmembrane segment spans residues Leu118–Ala139. Residues Asp140–Ala156 lie on the Cytoplasmic side of the membrane. A helical transmembrane segment spans residues Leu157–Pro177. Residues Glu178 to Ile211 lie on the Extracellular side of the membrane. Asn192 is a glycosylation site (N-linked (GlcNAc...) asparagine). The helical transmembrane segment at His212–Ile235 threads the bilayer. The Cytoplasmic segment spans residues Ala236 to Lys266. A helical membrane pass occupies residues Ile267 to Met287. Over Tyr288–Ser299 the chain is Extracellular. The helical transmembrane segment at Leu300–Leu327 threads the bilayer. Topologically, residues Ser328 to Leu390 are cytoplasmic. The S-palmitoyl cysteine moiety is linked to residue Cys341. Phosphoserine is present on Ser352.

It belongs to the G-protein coupled receptor 1 family. As to expression, expressed in epididymis (at protein level).

It localises to the cell membrane. In terms of biological role, receptor for neuromedin-B. Contributes to the maintenance of basal sigh rate through signaling in the pre-Botzinger complex, a cluster of several thousand neurons in the ventrolateral medulla responsible for inspiration during respiratory activity. Contributes to the induction of sneezing following exposure to chemical irritants or allergens which causes release of NMB by nasal sensory neurons and activation of NMBR-expressing neurons in the sneeze-evoking region of the brainstem. These in turn activate neurons of the caudal ventral respiratory group, giving rise to the sneezing response. Contributes to induction of acute itch, possibly through its activation on dorsal root ganglion neurons by the NMB peptide. Plays a role in the innate immune response to influenza A virus infection by enhancing interferon alpha expression and reducing expression of IL6. Plays a role in CSF1-induced proliferation of osteoclast precursors by contributing to the positive regulation of the expression of the CSF1 receptor CSF1R. The polypeptide is Neuromedin-B receptor (NMBR) (Homo sapiens (Human)).